Reading from the N-terminus, the 75-residue chain is MQVLVRDNNVDQALRALKKKMQREGIFREMKMRGHYEKPSEKRAREKAEAVRRARKLARKRAQREGLIGGRTGAR.

Belongs to the bacterial ribosomal protein bS21 family.

The sequence is that of Small ribosomal subunit protein bS21 from Brucella abortus (strain S19).